A 494-amino-acid chain; its full sequence is Putative transporter SVOPL (494 aa).

The next 10 membrane-spanning stretches (helical) occupy residues 48–68 (IALF…IMLI), 86–106 (VAFV…LFGL), 121–141 (FLWG…IWFV), 179–199 (VFWL…IPTI), 203–223 (WLIR…KFIP), 281–301 (TLQI…VILA), 350–370 (IIST…INFL), 385–405 (LFFL…FLFM), 431–451 (AIGM…APFI), and 460–480 (FLGA…SAFT).

This sequence belongs to the major facilitator superfamily.

Its subcellular location is the membrane. This Mus musculus (Mouse) protein is Putative transporter SVOPL (Svopl).